A 58-amino-acid chain; its full sequence is Protein SHMOOSE (58 aa).

A disordered region spans residues 27–58 (FGATPNKSNNHAHYYNHPNPDFPNSPHPYHPR). Positions 35–45 (NNHAHYYNHPN) are enriched in low complexity. Residues 46 to 58 (PDFPNSPHPYHPR) are compositionally biased toward pro residues.

In terms of assembly, interacts with IMMT/mitofilin. Detected in cerebrospinal fluid (at protein level).

The protein resides in the mitochondrion. It is found in the nucleus. In terms of biological role, increases neural cell metabolic activity and mitochondrial oxygen consumption rate. The polypeptide is Protein SHMOOSE (Homo sapiens (Human)).